Reading from the N-terminus, the 514-residue chain is ATP synthase subunit alpha (514 aa).

Position 170–177 (170–177) interacts with ATP; the sequence is GDRQTGKT.

The protein belongs to the ATPase alpha/beta chains family. As to quaternary structure, F-type ATPases have 2 components, CF(1) - the catalytic core - and CF(0) - the membrane proton channel. CF(1) has five subunits: alpha(3), beta(3), gamma(1), delta(1), epsilon(1). CF(0) has three main subunits: a(1), b(2) and c(9-12). The alpha and beta chains form an alternating ring which encloses part of the gamma chain. CF(1) is attached to CF(0) by a central stalk formed by the gamma and epsilon chains, while a peripheral stalk is formed by the delta and b chains.

The protein localises to the cell inner membrane. It carries out the reaction ATP + H2O + 4 H(+)(in) = ADP + phosphate + 5 H(+)(out). Produces ATP from ADP in the presence of a proton gradient across the membrane. The alpha chain is a regulatory subunit. The protein is ATP synthase subunit alpha of Psychrobacter sp. (strain PRwf-1).